The sequence spans 602 residues: Elongation factor 4 (602 aa).

Residues 7 to 189 (SQIRNFSIIA…AIVHRIPPPA (183 aa)) enclose the tr-type G domain. GTP-binding positions include 19–24 (DHGKST) and 136–139 (NKID).

The protein belongs to the TRAFAC class translation factor GTPase superfamily. Classic translation factor GTPase family. LepA subfamily.

Its subcellular location is the cell inner membrane. It carries out the reaction GTP + H2O = GDP + phosphate + H(+). Functionally, required for accurate and efficient protein synthesis under certain stress conditions. May act as a fidelity factor of the translation reaction, by catalyzing a one-codon backward translocation of tRNAs on improperly translocated ribosomes. Back-translocation proceeds from a post-translocation (POST) complex to a pre-translocation (PRE) complex, thus giving elongation factor G a second chance to translocate the tRNAs correctly. Binds to ribosomes in a GTP-dependent manner. This is Elongation factor 4 from Gloeobacter violaceus (strain ATCC 29082 / PCC 7421).